We begin with the raw amino-acid sequence, 333 residues long: Succinylglutamate desuccinylase (333 aa).

Zn(2+)-binding residues include H56, E59, and H149. Residue E214 is part of the active site.

The protein belongs to the AspA/AstE family. Succinylglutamate desuccinylase subfamily. Requires Zn(2+) as cofactor.

The catalysed reaction is N-succinyl-L-glutamate + H2O = L-glutamate + succinate. It participates in amino-acid degradation; L-arginine degradation via AST pathway; L-glutamate and succinate from L-arginine: step 5/5. Transforms N(2)-succinylglutamate into succinate and glutamate. The sequence is that of Succinylglutamate desuccinylase from Chromobacterium violaceum (strain ATCC 12472 / DSM 30191 / JCM 1249 / CCUG 213 / NBRC 12614 / NCIMB 9131 / NCTC 9757 / MK).